The sequence spans 208 residues: MEDYLEGLERAMRSMPAAKGTKERFQIPVPRIFYEGKTTVLDNFAAIADALNRDPDHLMKFLLQELGTAGKIEGHRGVFQGKFTEQAIQNQIAAYVDEYVICSECKLPDTHLIKSDRVLMLKCDACGAHRPVKKRKAKAVVARDVIEEGETYELRIESVGSKGDGIAKVDKYLIFVPNTSKGEIVKAKVKKISGTLAFAEIVERKGKA.

The TRAM domain maps to 145 to 203 (VIEEGETYELRIESVGSKGDGIAKVDKYLIFVPNTSKGEIVKAKVKKISGTLAFAEIVE).

Belongs to the eIF-2-beta/eIF-5 family. Heterotrimer composed of an alpha, a beta and a gamma chain.

In terms of biological role, eIF-2 functions in the early steps of protein synthesis by forming a ternary complex with GTP and initiator tRNA. This chain is Translation initiation factor 2 subunit beta, found in Methanothrix thermoacetophila (strain DSM 6194 / JCM 14653 / NBRC 101360 / PT) (Methanosaeta thermophila).